The following is a 306-amino-acid chain: Acyl transferase (306 aa).

Catalysis depends on charge relay system residues Ser-117, Asp-214, and His-244.

It belongs to the LuxD family.

The protein operates within lipid metabolism; fatty acid reduction for biolumincescence. Functionally, acyl transferase is part of the fatty acid reductase system required for aldehyde biosynthesis; it produces fatty acids for the luminescent reaction. This is Acyl transferase from Photobacterium phosphoreum.